A 921-amino-acid chain; its full sequence is Isoleucine--tRNA ligase 1 (921 aa).

The 'HIGH' region signature appears at 57 to 67 (PYANGDIHMGH). Residue Glu-552 coordinates L-isoleucyl-5'-AMP. The short motif at 593–597 (KMSKS) is the 'KMSKS' region element. An ATP-binding site is contributed by Lys-596. Zn(2+) contacts are provided by Cys-888, Cys-891, Cys-908, and Cys-911.

It belongs to the class-I aminoacyl-tRNA synthetase family. IleS type 1 subfamily. As to quaternary structure, monomer. Zn(2+) is required as a cofactor.

Its subcellular location is the cytoplasm. The enzyme catalyses tRNA(Ile) + L-isoleucine + ATP = L-isoleucyl-tRNA(Ile) + AMP + diphosphate. Functionally, catalyzes the attachment of isoleucine to tRNA(Ile). As IleRS can inadvertently accommodate and process structurally similar amino acids such as valine, to avoid such errors it has two additional distinct tRNA(Ile)-dependent editing activities. One activity is designated as 'pretransfer' editing and involves the hydrolysis of activated Val-AMP. The other activity is designated 'posttransfer' editing and involves deacylation of mischarged Val-tRNA(Ile). This chain is Isoleucine--tRNA ligase 1, found in Bacillus cereus (strain ZK / E33L).